Reading from the N-terminus, the 181-residue chain is Thymidine kinase (181 aa).

13 to 20 (GPMFSGKS) contacts ATP. Glutamate 85 serves as the catalytic Proton acceptor. Phenylalanine 115 provides a ligand contact to substrate. Zn(2+) contacts are provided by cysteine 140 and cysteine 143. A substrate-binding site is contributed by 159-163 (IEIIG). Zn(2+) contacts are provided by cysteine 172 and cysteine 175.

Belongs to the thymidine kinase family.

The catalysed reaction is thymidine + ATP = dTMP + ADP + H(+). The protein is Thymidine kinase (TK) of Yaba monkey tumor virus (strain VR587) (YMTV).